The sequence spans 170 residues: J domain-containing protein (170 aa).

The region spanning 17-82 is the J domain; the sequence is DYYALLGCDE…SKRALYDKWR (66 aa). Positions 101–170 are disordered; sequence QQSMHWSKPN…VLSKFRNYEI (70 aa). A compositionally biased stretch (basic and acidic residues) spans 110-120; it reads NTKDRMLEGDG. Residues 121 to 134 are compositionally biased toward low complexity; that stretch reads SKPSGPSSLGPSNP.

The sequence is that of J domain-containing protein (jdp) from Bombyx mori (Silk moth).